We begin with the raw amino-acid sequence, 492 residues long: N-succinylglutamate 5-semialdehyde dehydrogenase (492 aa).

An NAD(+)-binding site is contributed by 220 to 225 (GSSTTG). Residues Glu-243 and Cys-277 contribute to the active site.

It belongs to the aldehyde dehydrogenase family. AstD subfamily.

It carries out the reaction N-succinyl-L-glutamate 5-semialdehyde + NAD(+) + H2O = N-succinyl-L-glutamate + NADH + 2 H(+). Its pathway is amino-acid degradation; L-arginine degradation via AST pathway; L-glutamate and succinate from L-arginine: step 4/5. Its function is as follows. Catalyzes the NAD-dependent reduction of succinylglutamate semialdehyde into succinylglutamate. This is N-succinylglutamate 5-semialdehyde dehydrogenase from Klebsiella pneumoniae subsp. pneumoniae (strain ATCC 700721 / MGH 78578).